The following is a 181-amino-acid chain: Probable cobalt-precorrin-6B C(15)-methyltransferase (decarboxylating) (181 aa).

Residues Thr16, 40-44, Asp61, and Ala89 contribute to the S-adenosyl-L-methionine site; that span reads GCGSG.

It belongs to the methyltransferase superfamily. Archaeal-type CbiT family.

It carries out the reaction Co-precorrin-6B + S-adenosyl-L-methionine = Co-precorrin-7 + S-adenosyl-L-homocysteine + CO2. The protein operates within cofactor biosynthesis; adenosylcobalamin biosynthesis; cob(II)yrinate a,c-diamide from sirohydrochlorin (anaerobic route): step 8/10. Catalyzes the methylation of C-15 in cobalt-precorrin-6B followed by the decarboxylation of C-12 to form cobalt-precorrin-7. This is Probable cobalt-precorrin-6B C(15)-methyltransferase (decarboxylating) from Methanococcus maripaludis (strain DSM 14266 / JCM 13030 / NBRC 101832 / S2 / LL).